We begin with the raw amino-acid sequence, 1040 residues long: Multidrug resistance protein MdtB (1040 aa).

The next 12 membrane-spanning stretches (helical) occupy residues 16–36 (FIMRPVATTLLMVAILLAGII), 347–367 (LMMAIALVVMIIYLFLRNIPA), 369–389 (IIPGVAVPLSLIGTFAVMVFL), 396–416 (LTLMALTIATGFVVDDAIVVI), 440–460 (IGFTIISLTFSLIAVLIPLLF), 472–492 (FAITLAVAILISAVVSLTLTP), 537–557 (WLTLSVALSTLLLSVLLWVFI), 863–883 (LGSTVWLIVAAVVAMYIVLGI), 888–908 (FIHPITILSTLPTAGVGALLA), 911–931 (IAGSELDVIAIIGIILLIGIV), 968–988 (ILMTTLAALLGALPLMLSTGV), and 998–1018 (IGMVGGLIVSQVLTLFTTPVI).

Belongs to the resistance-nodulation-cell division (RND) (TC 2.A.6) family. MdtB subfamily. As to quaternary structure, part of a tripartite efflux system composed of MdtA, MdtB and MdtC. MdtB forms a heteromultimer with MdtC.

It localises to the cell inner membrane. Its function is as follows. The MdtABC tripartite complex confers resistance against novobiocin and deoxycholate. The protein is Multidrug resistance protein MdtB of Escherichia coli (strain 55989 / EAEC).